A 108-amino-acid polypeptide reads, in one-letter code: Heme oxygenase (staphylobilin-producing) (108 aa).

Positions 2-93 (FMAENRLQLQ…DDDGQQSPIL (92 aa)) constitute an ABM domain. N6 lines the Fe cation pocket. Residues 21 to 28 (RFYNRQGI) and H76 each bind heme.

It belongs to the antibiotic biosynthesis monooxygenase family. Heme-degrading monooxygenase IsdG subfamily. As to quaternary structure, homodimer.

It localises to the cytoplasm. The catalysed reaction is heme b + 5 AH2 + 4 O2 + 2 H(+) = delta-staphylobilin + Fe(2+) + formaldehyde + 5 A + 4 H2O. It carries out the reaction heme b + 5 AH2 + 4 O2 + 2 H(+) = beta-staphylobilin + Fe(2+) + formaldehyde + 5 A + 4 H2O. In terms of biological role, allows bacterial pathogens to use the host heme as an iron source. Catalyzes the oxidative degradation of the heme macrocyclic porphyrin ring to the oxo-bilirubin chromophore staphylobilin (a mixture of the linear tetrapyrroles 5-oxo-delta-bilirubin and 15-oxo-beta-bilirubin) in the presence of a suitable electron donor such as ascorbate or NADPH--cytochrome P450 reductase, with subsequent release of free iron. This Staphylococcus aureus (strain Mu3 / ATCC 700698) protein is Heme oxygenase (staphylobilin-producing) (isdI).